The following is a 649-amino-acid chain: Lipolysis-stimulated lipoprotein receptor (649 aa).

Residues 1-16 (MQQDGLGVGTRNGSGK) are compositionally biased toward gly residues. The disordered stretch occupies residues 1–21 (MQQDGLGVGTRNGSGKGRSVH). At 1 to 259 (MQQDGLGVGT…PGFQAGPIED (259 aa)) the chain is on the extracellular side. One can recognise an Ig-like V-type domain in the interval 86–234 (PARAIQVTVS…DLQGNNEAYA (149 aa)). Cys111 and Cys218 are disulfide-bonded. The chain crosses the membrane as a helical span at residues 260-280 (WLFVVVVCLAAFLIFLLLGIC). Residues 281–649 (WCQCCPHTCC…LALSRESLVV (369 aa)) are Cytoplasmic-facing. Phosphothreonine is present on Thr336. Ser365, Ser371, Ser389, Ser432, and Ser436 each carry phosphoserine. A disordered region spans residues 414–649 (NFDPSRPGPP…LALSRESLVV (236 aa)). The span at 426–444 (RVERAMSEVTSLHEDDWRS) shows a compositional bias: basic and acidic residues. Thr453 carries the phosphothreonine modification. Residues Ser464, Ser467, and Ser493 each carry the phosphoserine modification. The residue at position 501 (Thr501) is a Phosphothreonine. Residues 502–518 (PPSTAESGSRSPTSNGG) show a composition bias toward polar residues. 2 positions are modified to phosphoserine: Ser528 and Ser530. A compositionally biased stretch (basic and acidic residues) spans 529–565 (RSRDDLYDQDDSRDFPRSRDPHYDDFRSRERPPADPR). Tyr535 carries the post-translational modification Phosphotyrosine. Residues Ser540 and Ser579 each carry the phosphoserine modification. A compositionally biased stretch (basic and acidic residues) spans 589–609 (RLLEEAVRKKGSEERRRPHKE). Residue Ser631 is modified to Phosphoserine. A Glycyl lysine isopeptide (Lys-Gly) (interchain with G-Cter in ubiquitin) cross-link involves residue Lys638. Residues Ser643 and Ser646 each carry the phosphoserine modification.

It belongs to the immunoglobulin superfamily. LISCH7 family. Homotrimer or homotetramer. Assembles into cell-cell contacts. Interacts (via the cytoplasmic domain) with MARVELD2 (via C-terminal cytoplasmic domain); the interaction is required to recruit MARVELD2 to tricellular contacts. Interacts with OCLN. In terms of processing, phosphorylation at Ser-365 by MAPK8/JNK1 and MAPK9/JNK2 may be required for exclusive localization at tricellular tight junstions. Post-translationally, polyubiquitinated at Lys-638 via 'Lys-63'-linked ubiquitin chains; deubiquitinated by USP53.

The protein resides in the cell membrane. It is found in the cell junction. Its subcellular location is the tight junction. In terms of biological role, probable role in the clearance of triglyceride-rich lipoprotein from blood. Binds chylomicrons, LDL and VLDL in presence of free fatty acids and allows their subsequent uptake in the cells. Maintains epithelial barrier function by recruiting MARVELD2/tricellulin to tricellular tight junctions. The chain is Lipolysis-stimulated lipoprotein receptor from Homo sapiens (Human).